Reading from the N-terminus, the 465-residue chain is Argininosuccinate lyase (465 aa).

The protein belongs to the lyase 1 family. Argininosuccinate lyase subfamily.

The protein resides in the cytoplasm. The catalysed reaction is 2-(N(omega)-L-arginino)succinate = fumarate + L-arginine. Its pathway is amino-acid biosynthesis; L-arginine biosynthesis; L-arginine from L-ornithine and carbamoyl phosphate: step 3/3. The chain is Argininosuccinate lyase from Variovorax paradoxus (strain S110).